A 103-amino-acid chain; its full sequence is Small ribosomal subunit protein uS10 (103 aa).

The protein belongs to the universal ribosomal protein uS10 family. As to quaternary structure, part of the 30S ribosomal subunit.

Its function is as follows. Involved in the binding of tRNA to the ribosomes. The chain is Small ribosomal subunit protein uS10 from Shewanella loihica (strain ATCC BAA-1088 / PV-4).